The sequence spans 325 residues: MMKLFTKDKDGHFIREINGIKLPFPLTEFMKVRKLGYILSALLMVISLFFIITKGFNWGLDFTGGVVFDTHFSQSANLEQIRSKLHENGIESPIVQTTGSVQDVMIRLPASNNDSTIGEHVKSMLQNVDKDIQIRSIEFVGPNVGEELAQGAVYATLATLAMVLIYVGSRFEWRLGFGSIASLAHDVIITLGVFSALQIEIDLTFVAAILSVVGYSINDSIVVFDRVRENFRKIRRLDTIDIIDISLTQTLSRTIITSVTTLVVVMALFFFGGPSIHNFSLALLVGIGFGTYSSIFVAIAIAYDVGLRREHMIPPKVDKEIDELP.

Transmembrane regions (helical) follow at residues 36–56 (GYIL…TKGF), 148–168 (LAQG…IYVG), 175–197 (LGFG…FSAL), 202–224 (DLTF…IVVF), 254–274 (TIIT…FGGP), and 281–301 (LALL…AIAI).

This sequence belongs to the SecD/SecF family. SecF subfamily. As to quaternary structure, forms a complex with SecD. Part of the essential Sec protein translocation apparatus which comprises SecA, SecYEG and auxiliary proteins SecDF-YajC and YidC.

Its subcellular location is the cell inner membrane. In terms of biological role, part of the Sec protein translocase complex. Interacts with the SecYEG preprotein conducting channel. SecDF uses the proton motive force (PMF) to complete protein translocation after the ATP-dependent function of SecA. In Haemophilus influenzae (strain ATCC 51907 / DSM 11121 / KW20 / Rd), this protein is Protein translocase subunit SecF.